A 208-amino-acid chain; its full sequence is uncharacterized protein (208 aa).

This is an uncharacterized protein from Synechococcus elongatus (strain ATCC 33912 / PCC 7942 / FACHB-805) (Anacystis nidulans R2).